A 197-amino-acid chain; its full sequence is Pyridoxal 5'-phosphate synthase subunit PdxT (197 aa).

53 to 55 serves as a coordination point for L-glutamine; the sequence is GES. Residue C85 is the Nucleophile of the active site. L-glutamine contacts are provided by residues R114 and 142 to 143; that span reads IR. Active-site charge relay system residues include H179 and E181.

It belongs to the glutaminase PdxT/SNO family. In the presence of PdxS, forms a dodecamer of heterodimers. Only shows activity in the heterodimer.

It catalyses the reaction aldehydo-D-ribose 5-phosphate + D-glyceraldehyde 3-phosphate + L-glutamine = pyridoxal 5'-phosphate + L-glutamate + phosphate + 3 H2O + H(+). The catalysed reaction is L-glutamine + H2O = L-glutamate + NH4(+). Its pathway is cofactor biosynthesis; pyridoxal 5'-phosphate biosynthesis. Functionally, catalyzes the hydrolysis of glutamine to glutamate and ammonia as part of the biosynthesis of pyridoxal 5'-phosphate. The resulting ammonia molecule is channeled to the active site of PdxS. This is Pyridoxal 5'-phosphate synthase subunit PdxT from Thermococcus onnurineus (strain NA1).